The primary structure comprises 283 residues: Probable endonuclease 4 (283 aa).

Zn(2+) contacts are provided by His-69, His-113, Glu-148, Asp-182, His-185, His-217, Asp-230, His-232, and Glu-262.

The protein belongs to the AP endonuclease 2 family. Requires Zn(2+) as cofactor.

It catalyses the reaction Endonucleolytic cleavage to 5'-phosphooligonucleotide end-products.. Endonuclease IV plays a role in DNA repair. It cleaves phosphodiester bonds at apurinic or apyrimidinic (AP) sites, generating a 3'-hydroxyl group and a 5'-terminal sugar phosphate. This is Probable endonuclease 4 from Bifidobacterium longum (strain DJO10A).